The chain runs to 534 residues: C-22 sterol desaturase ERG5B (534 aa).

A helical transmembrane segment spans residues 43 to 61; it reads IAVTIFAVLIAYDQFMYIW. C480 serves as a coordination point for heme.

It belongs to the cytochrome P450 family. Requires heme as cofactor.

It is found in the endoplasmic reticulum membrane. It catalyses the reaction 5-dehydroepisterol + NADPH + O2 + H(+) = ergosta-5,7,22,24(28)-tetraen-3beta-ol + NADP(+) + 2 H2O. It participates in steroid metabolism; ergosterol biosynthesis. C-22 sterol desaturase; part of the third module of ergosterol biosynthesis pathway that includes the late steps of the pathway. ERG5A and ERG5B convert 5-dehydroepisterol into ergosta-5,7,22,24(28)-tetraen-3beta-ol by forming the C-22(23) double bond in the sterol side chain. The third module or late pathway involves the ergosterol synthesis itself through consecutive reactions that mainly occur in the endoplasmic reticulum (ER) membrane. Firstly, the squalene synthase ERG9 catalyzes the condensation of 2 farnesyl pyrophosphate moieties to form squalene, which is the precursor of all steroids. Squalene synthase is crucial for balancing the incorporation of farnesyl diphosphate (FPP) into sterol and nonsterol isoprene synthesis. Secondly, squalene is converted into lanosterol by the consecutive action of the squalene epoxidase ERG1 and the lanosterol synthase ERG7. Then, the delta(24)-sterol C-methyltransferase ERG6 methylates lanosterol at C-24 to produce eburicol. Eburicol is the substrate of the sterol 14-alpha demethylase encoded by CYP51A, CYP51B and CYP51C, to yield 4,4,24-trimethyl ergosta-8,14,24(28)-trienol. CYP51B encodes the enzyme primarily responsible for sterol 14-alpha-demethylation, and plays an essential role in ascospore formation. CYP51A encodes an additional sterol 14-alpha-demethylase, induced on ergosterol depletion and responsible for the intrinsic variation in azole sensitivity. The third CYP51 isoform, CYP51C, does not encode a sterol 14-alpha-demethylase, but is required for full virulence on host wheat ears. The C-14 reductase ERG24 then reduces the C14=C15 double bond which leads to 4,4-dimethylfecosterol. A sequence of further demethylations at C-4, involving the C-4 demethylation complex containing the C-4 methylsterol oxidases ERG25, the sterol-4-alpha-carboxylate 3-dehydrogenase ERG26 and the 3-keto-steroid reductase ERG27, leads to the production of fecosterol via 4-methylfecosterol. ERG28 has a role as a scaffold to help anchor ERG25, ERG26 and ERG27 to the endoplasmic reticulum. The C-8 sterol isomerase ERG2 then catalyzes the reaction which results in unsaturation at C-7 in the B ring of sterols and thus converts fecosterol to episterol. The sterol-C5-desaturases ERG3A and ERG3BB then catalyze the introduction of a C-5 double bond in the B ring to produce 5-dehydroepisterol. The C-22 sterol desaturases ERG5A and ERG5B further convert 5-dehydroepisterol into ergosta-5,7,22,24(28)-tetraen-3beta-ol by forming the C-22(23) double bond in the sterol side chain. Finally, ergosta-5,7,22,24(28)-tetraen-3beta-ol is substrate of the C-24(28) sterol reductase ERG4 to produce ergosterol. The chain is C-22 sterol desaturase ERG5B from Gibberella zeae (strain ATCC MYA-4620 / CBS 123657 / FGSC 9075 / NRRL 31084 / PH-1) (Wheat head blight fungus).